A 173-amino-acid polypeptide reads, in one-letter code: Disulfide bond formation protein B 2 (173 aa).

Residues 1–9 (MSLAGSRLL) lie on the Cytoplasmic side of the membrane. Residues 10–26 (FSLVFLVGALASWAAFN) traverse the membrane as a helical segment. The Periplasmic segment spans residues 27–44 (LQTGGGLESCSLWSVQRL). The chain crosses the membrane as a helical span at residues 45-61 (LLLALGGVNLLAVIQGP). Over 62 to 67 (GRVGRA) the chain is Cytoplasmic. A helical membrane pass occupies residues 68–85 (VYWGLNLLLGLLGVVTAG). The Periplasmic segment spans residues 86 to 142 (RHVLLQNIPSEQLLACLPDMSFMLRQLSWWQALKLTFMGTSDCAEVTWTLLDMSLPE). The cysteines at positions 101 and 128 are disulfide-linked. Residues 143–161 (WSLLFFVIMLIFSGYRLWR) traverse the membrane as a helical segment. The Cytoplasmic portion of the chain corresponds to 162-173 (QLRGARKAVALP).

It belongs to the DsbB family.

Its subcellular location is the cell inner membrane. In terms of biological role, required for disulfide bond formation in some periplasmic proteins. Acts by oxidizing the DsbA protein. This Pseudomonas fluorescens (strain ATCC BAA-477 / NRRL B-23932 / Pf-5) protein is Disulfide bond formation protein B 2.